The chain runs to 402 residues: 4-hydroxy-3-methylbut-2-enyl diphosphate reductase (402 aa).

Cysteine 66 serves as a coordination point for [4Fe-4S] cluster. Histidine 96 lines the (2E)-4-hydroxy-3-methylbut-2-enyl diphosphate pocket. Histidine 96 is a dimethylallyl diphosphate binding site. Histidine 96 is a binding site for isopentenyl diphosphate. Cysteine 157 provides a ligand contact to [4Fe-4S] cluster. Histidine 185 is a (2E)-4-hydroxy-3-methylbut-2-enyl diphosphate binding site. Residue histidine 185 coordinates dimethylallyl diphosphate. Histidine 185 provides a ligand contact to isopentenyl diphosphate. The active-site Proton donor is glutamate 187. Threonine 250 is a binding site for (2E)-4-hydroxy-3-methylbut-2-enyl diphosphate. Residue cysteine 288 participates in [4Fe-4S] cluster binding. Residues serine 317, serine 318, asparagine 319, and serine 379 each coordinate (2E)-4-hydroxy-3-methylbut-2-enyl diphosphate. Dimethylallyl diphosphate is bound by residues serine 317, serine 318, asparagine 319, and serine 379. Isopentenyl diphosphate contacts are provided by serine 317, serine 318, asparagine 319, and serine 379.

This sequence belongs to the IspH family. It depends on [4Fe-4S] cluster as a cofactor.

The catalysed reaction is isopentenyl diphosphate + 2 oxidized [2Fe-2S]-[ferredoxin] + H2O = (2E)-4-hydroxy-3-methylbut-2-enyl diphosphate + 2 reduced [2Fe-2S]-[ferredoxin] + 2 H(+). The enzyme catalyses dimethylallyl diphosphate + 2 oxidized [2Fe-2S]-[ferredoxin] + H2O = (2E)-4-hydroxy-3-methylbut-2-enyl diphosphate + 2 reduced [2Fe-2S]-[ferredoxin] + 2 H(+). The protein operates within isoprenoid biosynthesis; dimethylallyl diphosphate biosynthesis; dimethylallyl diphosphate from (2E)-4-hydroxy-3-methylbutenyl diphosphate: step 1/1. It participates in isoprenoid biosynthesis; isopentenyl diphosphate biosynthesis via DXP pathway; isopentenyl diphosphate from 1-deoxy-D-xylulose 5-phosphate: step 6/6. In terms of biological role, catalyzes the conversion of 1-hydroxy-2-methyl-2-(E)-butenyl 4-diphosphate (HMBPP) into a mixture of isopentenyl diphosphate (IPP) and dimethylallyl diphosphate (DMAPP). Acts in the terminal step of the DOXP/MEP pathway for isoprenoid precursor biosynthesis. The sequence is that of 4-hydroxy-3-methylbut-2-enyl diphosphate reductase from Microcystis aeruginosa (strain NIES-843 / IAM M-2473).